A 375-amino-acid chain; its full sequence is Actin-binding Rho-activating protein (375 aa).

Residues 37–101 (ANENSTRQAQ…ATEVSHIKRK (65 aa)) form a disordered region. Residues 80–101 (PDGDREGRGSEEATEVSHIKRK) show a composition bias toward basic and acidic residues. 2 positions are modified to phosphoserine: S150 and S182. The disordered stretch occupies residues 175 to 197 (EPKWKSDSIDTEDSGYGGDMEER). 2 actin-binding regions span residues 193 to 293 (DMEE…AERA) and 294 to 375 (KRAE…TLLE). 2 interaction with actin regions span residues 234–279 (SQVD…GDEG) and 346–375 (MRAR…TLLE).

As to quaternary structure, binds F-actin and ABLIM1, ABLIM2 and ABLIM3. Interaction with ABLIM2 and ABLIM3 enhances activity. As to expression, predominantly expressed in heart and skeletal muscle, and expressed at lower levels in adrenal gland, brain, kidney, liver, and testis.

It is found in the cytoplasm. The protein localises to the myofibril. The protein resides in the sarcomere. It localises to the cytoskeleton. Its function is as follows. Acts as an activator of serum response factor (SRF)-dependent transcription possibly by inducing nuclear translocation of MKL1 or MKL2 and through a mechanism requiring Rho-actin signaling. In Rattus norvegicus (Rat), this protein is Actin-binding Rho-activating protein.